Here is a 99-residue protein sequence, read N- to C-terminus: MKVTDVKVRKINGESRLRGVSSITFENQFVVNDIRIIEGERGIFIAMPSRKTSKGNFRDIAHPINSETRQIIENCIKTKYQDLLDNPPQEEDFSQNSEN.

Belongs to the SpoVG family.

Its function is as follows. Could be involved in septation. The polypeptide is Putative septation protein SpoVG (Aster yellows witches'-broom phytoplasma (strain AYWB)).